The following is a 239-amino-acid chain: 1-(5-phosphoribosyl)-5-[(5-phosphoribosylamino)methylideneamino] imidazole-4-carboxamide isomerase (239 aa).

Catalysis depends on Asp-8, which acts as the Proton acceptor. Residue Asp-129 is the Proton donor of the active site.

The protein belongs to the HisA/HisF family.

It is found in the cytoplasm. The enzyme catalyses 1-(5-phospho-beta-D-ribosyl)-5-[(5-phospho-beta-D-ribosylamino)methylideneamino]imidazole-4-carboxamide = 5-[(5-phospho-1-deoxy-D-ribulos-1-ylimino)methylamino]-1-(5-phospho-beta-D-ribosyl)imidazole-4-carboxamide. Its pathway is amino-acid biosynthesis; L-histidine biosynthesis; L-histidine from 5-phospho-alpha-D-ribose 1-diphosphate: step 4/9. The chain is 1-(5-phosphoribosyl)-5-[(5-phosphoribosylamino)methylideneamino] imidazole-4-carboxamide isomerase from Legionella pneumophila subsp. pneumophila (strain Philadelphia 1 / ATCC 33152 / DSM 7513).